The primary structure comprises 357 residues: Cytosolic Fe-S cluster assembly factor NAR1 (357 aa).

[4Fe-4S] cluster-binding residues include Cys14, Cys28, Cys31, Cys34, Cys129, Cys172, Cys297, and Cys301.

It belongs to the NARF family.

Component of the cytosolic Fe/S protein assembly machinery. May play a role in the transfer of pre-assembled Fe/S clusters to target apoproteins. This is Cytosolic Fe-S cluster assembly factor NAR1 (NAR1) from Encephalitozoon cuniculi (strain GB-M1) (Microsporidian parasite).